A 791-amino-acid chain; its full sequence is MLLSFRRNRRSQFNHIIHGFLPAASIAPKPAVPRTPPPRSPNPSPERPRSALAAAILATTLTGQTVAIPQPRQRSRSESDASDIEKDSFIKPYATTSELRLRQSWQNEPRRTSLPSFEMLGYGEDEDAETQVSTSCRESESTWKDVGDGRDATYTVPHRDQVLPSQKLVRKDDAPQPDWLSDSSSSSSSSTPQHTQQKDVKHSVLNLEGEKVRLHEKPPPSPDVAGRIHQRYTEITKEKFAELKEETVHLYSANQALSCELSALRQAMKDLQLKLKLVEKDNRKLKETEKASCQEGVTPELLCLRKQSQDLVDENEGLKMIVHRLNVELSRYQTKFRPLSEEESSHIQGLPSKGPTPPWLVDIKYLSPLLLAYEDRMKEKDKLSTALEEEMKTFRLRVQEVVKENEALHQELTKRSPVTVEEWRQLQTQAELVLDENKLLIEQLEIQQAKARDTHQAHLQDVSKLTKQLVLLEAKTQGQEKQLVESTEQLESLQAKCTELKAQLDSKIAVDVHTSIVNELKSQLQKEEEKDSAEMEELMAKLTALQVQKKSLLLEKSSWATRNRALEAELERTRKANRRYQKRIDVLRKQVEKAMGKEMSAHQYLANLVGLAETVTKERDSLKYLAQCLESEKHGVLNKILKGNIRLGKLEERVKGYKKQAALKLGDIHHRLKEQQEDFAGKAAQYQKEVKHLHRMLQEKQEVLDEALQQKRNMEGELEMVLESTAKENRRMRSLLQATLERRSTQHVTAPPDTCLRRSSQGDLLIGHDFSYGDVQLLATTNRQSLGESMA.

Residues Ala27–Ser203 are disordered. Pro residues predominate over residues Pro30 to Pro45. Ser50 is subject to Phosphoserine. Over residues Ser50–Thr62 the composition is skewed to low complexity. The span at Ser75–Phe89 shows a compositional bias: basic and acidic residues. Residues Ala94 to Asn107 show a composition bias toward polar residues. The segment covering Arg137–Gln161 has biased composition (basic and acidic residues). The segment covering Ser181 to Ser190 has biased composition (low complexity). Coiled-coil stretches lie at residues Ser252–Ala291, Leu370–Glu598, and His670–Gln737.

The protein resides in the cytoplasm. Its subcellular location is the cytosol. The protein localises to the cytoskeleton. It localises to the microtubule organizing center. It is found in the centrosome. The protein resides in the spindle pole. Its subcellular location is the centriole. The protein localises to the mitochondrion intermembrane space. Required for ciliogenesis. Also plays a role in mitochondrial metabolism where it may modulate complex IV activity. The protein is Centrosomal protein of 89 kDa (Cep89) of Mus musculus (Mouse).